The sequence spans 500 residues: Probable E3 ubiquitin-protein ligase ARI16 (500 aa).

Residues 74–288 (NSNSSSADRE…QGNWNCSPVA (215 aa)) are TRIAD supradomain. The RING-type 1 zinc-finger motif lies at 78 to 130 (SSADRETGDGDYLVSTPFCSHKFSTTCWSEYLSDALKKNKEQRGLISCLSQDC). Zn(2+) contacts are provided by Cys-96, His-98, Cys-125, Cys-130, Cys-169, Cys-174, Cys-194, Cys-196, Cys-201, Cys-204, His-209, Cys-214, Cys-241, Cys-244, Cys-261, Cys-263, Cys-268, Cys-271, His-278, and Cys-284. Residues 148–214 (EMYENYILES…GLESHRPVSC (67 aa)) form an IBR-type zinc finger. The segment at 241–271 (CPKCKIPVQQNGDPNYRLINCICSNNFCWIC) adopts an RING-type 2; atypical zinc-finger fold. A RanBP2-type zinc finger spans residues 453-483 (EPGSRWFCDRCTFENSWVDKQCKMCFFPLDY).

It belongs to the RBR family. Ariadne subfamily. It depends on Zn(2+) as a cofactor. As to expression, preferentially expressed in green siliques.

It catalyses the reaction [E2 ubiquitin-conjugating enzyme]-S-ubiquitinyl-L-cysteine + [acceptor protein]-L-lysine = [E2 ubiquitin-conjugating enzyme]-L-cysteine + [acceptor protein]-N(6)-ubiquitinyl-L-lysine.. The protein operates within protein modification; protein ubiquitination. In terms of biological role, might act as an E3 ubiquitin-protein ligase, or as part of E3 complex, which accepts ubiquitin from specific E2 ubiquitin-conjugating enzymes and then transfers it to substrates. The protein is Probable E3 ubiquitin-protein ligase ARI16 (ARI16) of Arabidopsis thaliana (Mouse-ear cress).